We begin with the raw amino-acid sequence, 915 residues long: Metabotropic glutamate receptor 7 (915 aa).

The signal sequence occupies residues 1 to 34; that stretch reads MVQLRKLLRVLTLMKFPCCVLEVLLCALAAAARG. Topologically, residues 35-590 are extracellular; that stretch reads QEMYAPHSIR…IIKLEWHSPW (556 aa). A disulfide bridge connects residues Cys-67 and Cys-109. An N-linked (GlcNAc...) asparagine glycan is attached at Asn-98. L-glutamate-binding positions include Ser-159, 180–182, Tyr-230, and Asp-314; that span reads AST. 7 cysteine pairs are disulfide-bonded: Cys-249–Cys-541, Cys-374–Cys-390, Cys-430–Cys-437, Cys-523–Cys-542, Cys-527–Cys-545, Cys-548–Cys-560, and Cys-563–Cys-576. An L-glutamate-binding site is contributed by Lys-407. Residues Asn-458 and Asn-486 are each glycosylated (N-linked (GlcNAc...) asparagine). N-linked (GlcNAc...) asparagine glycosylation occurs at Asn-572. A helical transmembrane segment spans residues 591 to 615; that stretch reads AVIPVFLAMLGIIATIFVMATFIRY. The Cytoplasmic portion of the chain corresponds to 616-627; sequence NDTPIVRASGRE. The helical transmembrane segment at 628 to 648 threads the bilayer; sequence LSYVLLTGIFLCYIITFLMIA. The Extracellular segment spans residues 649–654; sequence KPDVAV. The chain crosses the membrane as a helical span at residues 655 to 675; the sequence is CSFRRVFLGLGMCISYAALLT. The Cytoplasmic segment spans residues 676-702; it reads KTNRIYRIFEQGKKSVTAPRLISPTSQ. The chain crosses the membrane as a helical span at residues 703-723; the sequence is LAITSSLISVQLLGVFIWFGV. The Extracellular portion of the chain corresponds to 724-753; the sequence is DPPNIIIDYDEHKTMNPEQARGVLKCDITD. The helical transmembrane segment at 754–775 threads the bilayer; sequence LQIICSLGYSILLMVTCTVYAI. Over 776-788 the chain is Cytoplasmic; it reads KTRGVPENFNEAK. A helical transmembrane segment spans residues 789–810; that stretch reads PIGFTMYTTCIVWLAFIPIFFG. Residues 811–825 lie on the Extracellular side of the membrane; that stretch reads TAQSAEKLYIQTTTL. The chain crosses the membrane as a helical span at residues 826 to 850; it reads TISMNLSASVALGMLYMPKVYIIIF. Topologically, residues 851 to 915 are cytoplasmic; it reads HPELNVQKRK…KYVSYNNLVI (65 aa). The disordered stretch occupies residues 874–895; sequence SRLSHKPSDRPNGEAKTELCEN. The segment covering 879–892 has biased composition (basic and acidic residues); that stretch reads KPSDRPNGEAKTEL. Ser-900 carries the post-translational modification Phosphoserine.

Belongs to the G-protein coupled receptor 3 family. As to quaternary structure, homodimer. Interacts with PICK1. N-glycosylated. Expressed in many areas of the brain, especially in the cerebral cortex, hippocampus, and cerebellum. Expression of GRM7 isoforms in non-neuronal tissues appears to be restricted to isoform 3 and isoform 4.

It localises to the cell membrane. Functionally, G-protein coupled receptor activated by glutamate that regulates axon outgrowth through the MAPK-cAMP-PKA signaling pathway during neuronal development. Ligand binding causes a conformation change that triggers signaling via guanine nucleotide-binding proteins (G proteins) and modulates the activity of downstream effectors, such as adenylate cyclase that it inhibits. The chain is Metabotropic glutamate receptor 7 (GRM7) from Homo sapiens (Human).